A 433-amino-acid polypeptide reads, in one-letter code: 3-phosphoshikimate 1-carboxyvinyltransferase (433 aa).

3-phosphoshikimate is bound by residues lysine 15, serine 16, and arginine 20. Lysine 15 provides a ligand contact to phosphoenolpyruvate. Phosphoenolpyruvate-binding residues include glycine 96 and arginine 124. The 3-phosphoshikimate site is built by serine 169, glutamine 171, serine 195, aspartate 318, and lysine 345. Glutamine 171 serves as a coordination point for phosphoenolpyruvate. Aspartate 318 (proton acceptor) is an active-site residue. Arginine 349 and arginine 393 together coordinate phosphoenolpyruvate.

Belongs to the EPSP synthase family. As to quaternary structure, monomer.

The protein resides in the cytoplasm. The catalysed reaction is 3-phosphoshikimate + phosphoenolpyruvate = 5-O-(1-carboxyvinyl)-3-phosphoshikimate + phosphate. It functions in the pathway metabolic intermediate biosynthesis; chorismate biosynthesis; chorismate from D-erythrose 4-phosphate and phosphoenolpyruvate: step 6/7. Its function is as follows. Catalyzes the transfer of the enolpyruvyl moiety of phosphoenolpyruvate (PEP) to the 5-hydroxyl of shikimate-3-phosphate (S3P) to produce enolpyruvyl shikimate-3-phosphate and inorganic phosphate. This is 3-phosphoshikimate 1-carboxyvinyltransferase from Pelodictyon phaeoclathratiforme (strain DSM 5477 / BU-1).